The chain runs to 1705 residues: Clathrin heavy chain 1 (1705 aa).

Alanine 2 is subject to N-acetylalanine. The segment at 2–492 (AAANAPIIMK…VDNDLALKIY (491 aa)) is globular terminal domain. WD40-like repeat stretches follow at residues 25-67 (FITF…RPIT), 68-113 (ADSA…MPEQ), 114-155 (VAFW…ANLA), 156-205 (NNQI…QALE), 206-270 (AHAA…PDFA), 271-314 (DDFP…ISPD), and 315-343 (PIFL…ATVN). The segment at 462 to 478 (ENWLAEDKLECSEELGD) is binding site for the uncoating ATPase, involved in lattice disassembly. The tract at residues 493–536 (IKARATPKVVAAFAERREFDKILIYSKQVGYTPDYMFLLQTILR) is flexible linker. Residues 537–648 (TDPQGAVNFA…QSLKHYSELP (112 aa)) form a distal segment region. Residues 537 to 1705 (TDPQGAVNFA…PYGMPPMGGY (1169 aa)) form a heavy chain arm region. 7 CHCR repeats span residues 551-697 (QMEG…QIIV), 700-842 (CKEY…PEDF), 847-986 (ILSV…QLID), 993-1138 (LPES…VSDA), 1142-1283 (FIRA…FRLA), 1288-1434 (LNII…DIIN), and 1437-1580 (LNVL…KECF). A proximal segment region spans residues 653–1705 (VIVNTHAIEP…PYGMPPMGGY (1053 aa)). The involved in binding clathrin light chain stretch occupies residues 1227–1536 (AAKIIYAFIS…YIYKKAGRWK (310 aa)). The tract at residues 1564-1705 (AEQLLVYFIE…PYGMPPMGGY (142 aa)) is trimerization.

It belongs to the clathrin heavy chain family. As to quaternary structure, clathrin triskelions, composed of 3 heavy chains and 3 light chains, are the basic subunits of the clathrin coat. Interacts with SCYL2B.

It localises to the cytoplasmic vesicle membrane. The protein localises to the membrane. The protein resides in the coated pit. Its function is as follows. Clathrin is the major protein of the polyhedral coat of coated pits and vesicles. Mediates endocytosis and is required for a correct polar distribution of PIN auxin transporters. The polypeptide is Clathrin heavy chain 1 (Arabidopsis thaliana (Mouse-ear cress)).